The chain runs to 249 residues: Small ribosomal subunit protein uS2 (249 aa).

This sequence belongs to the universal ribosomal protein uS2 family.

In Listeria innocua serovar 6a (strain ATCC BAA-680 / CLIP 11262), this protein is Small ribosomal subunit protein uS2.